The sequence spans 338 residues: 2-methyl-6-phytyl-1,4-hydroquinone methyltransferase, chloroplastic (338 aa).

The transit peptide at 1–51 directs the protein to the chloroplast; sequence MASLMLNGAITFPKGLGSPGSNLHARSIPRPTLLSVTRTSTPRLSVATRCS. The Chloroplast intermembrane portion of the chain corresponds to 52-307; the sequence is SSSVSSSRPS…VNNPFSFLGR (256 aa). The interval 114 to 123 is SAM motif I; it reads VVDVGGGTGF. The tract at residues 159 to 172 is SAM motif II; the sequence is CKIVEGDAEDLPFP. An SAM motif III region spans residues 200–213; sequence RVLKIGGKACLIGP. A helical transmembrane segment spans residues 308 to 328; it reads FLLGTLAAAWFVLIPIYMWIK. The Stromal portion of the chain corresponds to 329–338; that stretch reads DQIVPKDQPI.

This sequence belongs to the class I-like SAM-binding methyltransferase superfamily. MPBQ/MBSQ MT family.

Its subcellular location is the plastid. The protein resides in the chloroplast inner membrane. The enzyme catalyses 2-methyl-6-phytyl-1,4-benzene-1,4-diol + S-adenosyl-L-methionine = 2,3-dimethyl-6-phytylbenzene-1,4-diol + S-adenosyl-L-homocysteine + H(+). It carries out the reaction 2-methyl-6-(all-trans-nonaprenyl)benzene-1,4-diol + S-adenosyl-L-methionine = plastoquinol-9 + S-adenosyl-L-homocysteine + H(+). It catalyses the reaction 6-geranylgeranyl-2-methylbenzene-1,4-diol + S-adenosyl-L-methionine = 6-geranylgeranyl-2,3-dimethylbenzene-1,4-diol + S-adenosyl-L-homocysteine + H(+). The protein operates within cofactor biosynthesis; tocopherol biosynthesis. Its function is as follows. Involved in a key methylation step in both tocopherols (vitamin E) and plastoquinone synthesis. Catalyzes the conversion of 2-methyl-6-phytyl-1,4-hydroquinone (MPBQ) to 2,3-dimethyl-6-phytyl-1,4-hydroquinone (DMPQ, a substrate for tocopherol cyclase), and 2-methyl-6-solanyl-1,4-benzoquinone (MSBQ) to plastoquinone. The chain is 2-methyl-6-phytyl-1,4-hydroquinone methyltransferase, chloroplastic (VTE3) from Arabidopsis thaliana (Mouse-ear cress).